The primary structure comprises 635 residues: Dihydrolipoyllysine-residue acetyltransferase component of pyruvate dehydrogenase complex, mitochondrial (635 aa).

The 78-residue stretch at 83–160 folds into the Lipoyl-binding 1 domain; that stretch reads GKEITMPALS…EINKPIAIIV (78 aa). K124 carries the N6-lipoyllysine modification. Positions 171-204 are disordered; it reads KNYKPSSQASSTPVQEEAPKPKQEAPKKSTKTYP. The segment covering 174 to 184 has biased composition (polar residues); sequence KPSSQASSTPV. Positions 187-197 are enriched in basic and acidic residues; that stretch reads EAPKPKQEAPK. Positions 206–283 constitute a Lipoyl-binding 2 domain; the sequence is HKVVGMPALS…QINQPVCIIV (78 aa). K247 carries the post-translational modification N6-lipoyllysine. The tract at residues 295–338 is disordered; sequence YSVEEQSSSSSSSSQESTPSSSSSSSQESTPSQSSSQQTTRKSG. The span at 298-334 shows a compositional bias: low complexity; sequence EEQSSSSSSSSQESTPSSSSSSSQESTPSQSSSQQTT. Residues 342–379 form the Peripheral subunit-binding (PSBD) domain; it reads FATPAARFEASSKGYDLSAINGTGPNNRILKADVLEFV. Positions 382-413 are disordered; the sequence is KQEVAQQQQQQTTTTTKKPTTPTSSGEFTDIP. Positions 387-404 are enriched in low complexity; that stretch reads QQQQQQTTTTTKKPTTPT. Residues 403 to 635 are catalytic; the sequence is PTSSGEFTDI…YVENPIKLIL (233 aa).

It belongs to the 2-oxoacid dehydrogenase family. As to quaternary structure, 20 to 30 alpha(2)-beta(2) tetramers of E1 + 6 homodimers of E3 + 60 copies of E2. (R)-lipoate is required as a cofactor.

It is found in the mitochondrion matrix. It carries out the reaction N(6)-[(R)-dihydrolipoyl]-L-lysyl-[protein] + acetyl-CoA = N(6)-[(R)-S(8)-acetyldihydrolipoyl]-L-lysyl-[protein] + CoA. The pyruvate dehydrogenase complex catalyzes the overall conversion of pyruvate to acetyl-CoA and CO(2). It contains multiple copies of three enzymatic components: pyruvate dehydrogenase (E1), dihydrolipoamide acetyltransferase (E2) and lipoamide dehydrogenase (E3). The protein is Dihydrolipoyllysine-residue acetyltransferase component of pyruvate dehydrogenase complex, mitochondrial (pdhC) of Dictyostelium discoideum (Social amoeba).